The following is a 246-amino-acid chain: Uridylate kinase (246 aa).

11–14 is an ATP binding site; that stretch reads KISG. UMP is bound at residue glycine 53. Residues glycine 54 and arginine 58 each coordinate ATP. UMP-binding positions include aspartate 74 and 135 to 142; that span reads TGSPYLTT. Residues threonine 162, tyrosine 169, and aspartate 172 each coordinate ATP.

The protein belongs to the UMP kinase family. Homohexamer.

The protein resides in the cytoplasm. It catalyses the reaction UMP + ATP = UDP + ADP. It participates in pyrimidine metabolism; CTP biosynthesis via de novo pathway; UDP from UMP (UMPK route): step 1/1. With respect to regulation, inhibited by UTP. In terms of biological role, catalyzes the reversible phosphorylation of UMP to UDP. This chain is Uridylate kinase, found in Chlamydia abortus (strain DSM 27085 / S26/3) (Chlamydophila abortus).